A 546-amino-acid chain; its full sequence is Chaperonin GroEL 1 (546 aa).

ATP is bound by residues 29-32 (TLGP), 86-90 (DGTTT), glycine 414, and aspartate 499.

It belongs to the chaperonin (HSP60) family. Forms a cylinder of 14 subunits composed of two heptameric rings stacked back-to-back. Interacts with the co-chaperonin GroES.

Its subcellular location is the cytoplasm. The enzyme catalyses ATP + H2O + a folded polypeptide = ADP + phosphate + an unfolded polypeptide.. In terms of biological role, together with its co-chaperonin GroES, plays an essential role in assisting protein folding. The GroEL-GroES system forms a nano-cage that allows encapsulation of the non-native substrate proteins and provides a physical environment optimized to promote and accelerate protein folding. The sequence is that of Chaperonin GroEL 1 from Roseiflexus sp. (strain RS-1).